The chain runs to 405 residues: FK506-binding protein 4 (405 aa).

Disordered stretches follow at residues 49–117 (THNP…EDEL) and 164–297 (QQDE…PQKK). Acidic residues-rich tracts occupy residues 59 to 84 (ESDDEWSDEDEDEEILSEEDDGEMEV), 98 to 117 (VEEEDSEEEDEDESDFEDEL), and 165 to 201 (QDEDSDDESDSDFDGEDDYSELYGSDDDLELDSEEEA). Composition is skewed to basic and acidic residues over residues 238–252 (RKAEELESPAKEDAA) and 265–276 (AKVEGEKAEEKP). In terms of domain architecture, PPIase FKBP-type spans 319–405 (GKRLGMRYIG…KFDVKLVSIN (87 aa)).

Belongs to the FKBP-type PPIase family. FKBP3/4 subfamily. In terms of assembly, binds to histones H3 and H4.

It localises to the nucleus. The catalysed reaction is [protein]-peptidylproline (omega=180) = [protein]-peptidylproline (omega=0). Its activity is regulated as follows. Inhibited by both FK506 and rapamycin. Its function is as follows. PPIase that acts as a histone chaperone. Histone proline isomerase that increases the rate of cis-trans isomerization at prolines on the histone H3 N-terminal tail. Proline isomerization influences H3 methylation thereby regulating gene expression. The protein is FK506-binding protein 4 (FPR4) of Cryptococcus neoformans var. neoformans serotype D (strain B-3501A) (Filobasidiella neoformans).